A 201-amino-acid polypeptide reads, in one-letter code: Diadenylate cyclase CdaS (201 aa).

The 148-residue stretch at 54 to 201 folds into the DAC domain; sequence QTLAATYYIQ…LNGILYTISL (148 aa).

It belongs to the adenylate cyclase family. DacB/CdaS subfamily. In terms of assembly, probably forms a homohexamer. It depends on Mg(2+) as a cofactor.

It carries out the reaction 2 ATP = 3',3'-c-di-AMP + 2 diphosphate. Its function is as follows. One of 3 paralogous diadenylate cyclases (DAC) in this bacteria catalyzing the condensation of 2 ATP molecules into cyclic di-AMP (c-di-AMP). It has slow DAC activity with ADP as a substrate and may have weak ADPase activity. Required for efficient spore formation, whereas in B.subtilis, it is required for efficient spore germination. It is produced under the control of different sigma factors in the two bacteria. It is also required for parasporal crystal formation. The polypeptide is Diadenylate cyclase CdaS (Bacillus thuringiensis (strain BMB171)).